The chain runs to 311 residues: Formimidoylglutamase (311 aa).

6 residues coordinate Mn(2+): histidine 122, aspartate 151, histidine 153, aspartate 155, cysteine 242, and aspartate 244.

This sequence belongs to the arginase family. Mn(2+) serves as cofactor.

It catalyses the reaction N-formimidoyl-L-glutamate + H2O = formamide + L-glutamate. It participates in amino-acid degradation; L-histidine degradation into L-glutamate; L-glutamate from N-formimidoyl-L-glutamate (hydrolase route): step 1/1. Catalyzes the conversion of N-formimidoyl-L-glutamate to L-glutamate and formamide. The protein is Formimidoylglutamase of Pseudomonas paraeruginosa (strain DSM 24068 / PA7) (Pseudomonas aeruginosa (strain PA7)).